The primary structure comprises 435 residues: BAHD acyltransferase BIA1 (435 aa).

Residues histidine 151 and aspartate 369 each act as proton acceptor in the active site.

This sequence belongs to the plant acyltransferase family. Mostly expressed in roots (particularly in the root elongation zone), and, to a lower extent, in seedling, leaves (especially in hydathodes), siliques (e.g. in developing seeds) and flowers.

It is found in the cytoplasm. Monitors brassinosteroids (BR) responses and homeostasis, particularly in the root and hypocotyl in darkness. Promotes flavonoid biosynthesis. The polypeptide is BAHD acyltransferase BIA1 (Arabidopsis thaliana (Mouse-ear cress)).